The primary structure comprises 84 residues: Beta-mammal toxin Cn2 (84 aa).

The N-terminal stretch at 1 to 16 is a signal peptide; sequence LLIITACLALIGTVWA. Residues 17-82 enclose the LCN-type CS-alpha/beta domain; it reads KEGYLVDKNT…VWPLPNKRCS (66 aa). 4 disulfide bridges follow: cysteine 28–cysteine 81, cysteine 32–cysteine 57, cysteine 41–cysteine 62, and cysteine 45–cysteine 64. Position 82 is a serine amide (serine 82).

The protein belongs to the long (4 C-C) scorpion toxin superfamily. Sodium channel inhibitor family. Beta subfamily. Expressed by the venom gland.

The protein localises to the secreted. In terms of biological role, mammal beta-toxins bind voltage-independently at site-4 of sodium channels (Nav) and shift the activation voltage to more negative potentials. This toxin is active against mammals. The protein is Beta-mammal toxin Cn2 of Centruroides noxius (Mexican scorpion).